Consider the following 154-residue polypeptide: Superoxide dismutase [Cu-Zn] (154 aa).

Histidine 47, histidine 49, and histidine 64 together coordinate Cu cation. A disulfide bridge links cysteine 58 with cysteine 147. Residues histidine 64, histidine 72, histidine 81, and aspartate 84 each contribute to the Zn(2+) site. Histidine 121 serves as a coordination point for Cu cation. Basic and acidic residues predominate over residues 125–137; sequence DDLGRSEHPESKK. Residues 125-144 are disordered; it reads DDLGRSEHPESKKTGNAGAR. Residue arginine 144 coordinates substrate.

The protein belongs to the Cu-Zn superoxide dismutase family. In terms of assembly, homodimer. Cu cation is required as a cofactor. Requires Zn(2+) as cofactor.

It is found in the cytoplasm. The enzyme catalyses 2 superoxide + 2 H(+) = H2O2 + O2. Its function is as follows. Destroys radicals which are normally produced within the cells and which are toxic to biological systems. This is Superoxide dismutase [Cu-Zn] (sodC) from Aspergillus oryzae (strain ATCC 42149 / RIB 40) (Yellow koji mold).